The following is a 338-amino-acid chain: Ferredoxin--NADP reductase (338 aa).

Residues T14, D33, Q41, Y46, V86, F120, D284, and T325 each coordinate FAD.

The protein belongs to the ferredoxin--NADP reductase type 2 family. As to quaternary structure, homodimer. It depends on FAD as a cofactor.

It carries out the reaction 2 reduced [2Fe-2S]-[ferredoxin] + NADP(+) + H(+) = 2 oxidized [2Fe-2S]-[ferredoxin] + NADPH. The protein is Ferredoxin--NADP reductase of Pelagibacter ubique (strain HTCC1062).